Here is a 35-residue protein sequence, read N- to C-terminus: PTEN upstream open reading frame MP31 (35 aa).

As to quaternary structure, interacts with lactate dehydrogenases LDHA and LDHB; interaction with mitochondrial LDH leads to inhibition of lactate dehydrogenase activity, preventing conversion of lactate to pyruvate. As to expression, detected in brain, kidney and liver (at protein level).

The protein resides in the mitochondrion. Its function is as follows. Inhibits lactate dehydrogenase (LDH)-mediated conversion of lactate to pyruvate in mitochondria by competing with mitochondrial LDH for binding to NAD(+). Also inhibits cellular lactate utilization. The protein is PTEN upstream open reading frame MP31 of Mus musculus (Mouse).